The chain runs to 665 residues: RNA-directed RNA polymerase (665 aa).

The RdRp catalytic domain maps to 310–485; sequence NKEEKVKEWS…LKEGKVNPSP (176 aa). Aspartate 454, tyrosine 491, and glycine 495 together coordinate Mg(2+).

As to quaternary structure, part of the packaging complex composed of RDRP, P4 and P7. Interacts with P7. Mg(2+) is required as a cofactor. It depends on Mn(2+) as a cofactor.

It localises to the virion. It carries out the reaction RNA(n) + a ribonucleoside 5'-triphosphate = RNA(n+1) + diphosphate. In terms of biological role, rna-dependent RNA polymerase part of the packaging complex that packages the viral RNA segments, replicate them into a double-stranded form and transcribe them. The chain is RNA-directed RNA polymerase (P2) from Pseudomonas phage phi6 (Bacteriophage phi-6).